Reading from the N-terminus, the 289-residue chain is Ribosomal RNA small subunit methyltransferase A (289 aa).

The S-adenosyl-L-methionine site is built by N21, L23, G48, E69, D94, and N120.

The protein belongs to the class I-like SAM-binding methyltransferase superfamily. rRNA adenine N(6)-methyltransferase family. RsmA subfamily.

It is found in the cytoplasm. It carries out the reaction adenosine(1518)/adenosine(1519) in 16S rRNA + 4 S-adenosyl-L-methionine = N(6)-dimethyladenosine(1518)/N(6)-dimethyladenosine(1519) in 16S rRNA + 4 S-adenosyl-L-homocysteine + 4 H(+). Functionally, specifically dimethylates two adjacent adenosines (A1518 and A1519) in the loop of a conserved hairpin near the 3'-end of 16S rRNA in the 30S particle. May play a critical role in biogenesis of 30S subunits. This Haemophilus ducreyi (strain 35000HP / ATCC 700724) protein is Ribosomal RNA small subunit methyltransferase A.